A 292-amino-acid polypeptide reads, in one-letter code: Lipoyl synthase (292 aa).

The [4Fe-4S] cluster site is built by C38, C43, C49, C64, C68, C71, and S277. The region spanning 50–266 (WSKGTATFLL…REIALDAGFR (217 aa)) is the Radical SAM core domain.

Belongs to the radical SAM superfamily. Lipoyl synthase family. [4Fe-4S] cluster serves as cofactor.

It is found in the cytoplasm. It catalyses the reaction [[Fe-S] cluster scaffold protein carrying a second [4Fe-4S](2+) cluster] + N(6)-octanoyl-L-lysyl-[protein] + 2 oxidized [2Fe-2S]-[ferredoxin] + 2 S-adenosyl-L-methionine + 4 H(+) = [[Fe-S] cluster scaffold protein] + N(6)-[(R)-dihydrolipoyl]-L-lysyl-[protein] + 4 Fe(3+) + 2 hydrogen sulfide + 2 5'-deoxyadenosine + 2 L-methionine + 2 reduced [2Fe-2S]-[ferredoxin]. The protein operates within protein modification; protein lipoylation via endogenous pathway; protein N(6)-(lipoyl)lysine from octanoyl-[acyl-carrier-protein]: step 2/2. Its function is as follows. Catalyzes the radical-mediated insertion of two sulfur atoms into the C-6 and C-8 positions of the octanoyl moiety bound to the lipoyl domains of lipoate-dependent enzymes, thereby converting the octanoylated domains into lipoylated derivatives. In Chlorobaculum parvum (strain DSM 263 / NCIMB 8327) (Chlorobium vibrioforme subsp. thiosulfatophilum), this protein is Lipoyl synthase.